Consider the following 306-residue polypeptide: Proline-rich transmembrane protein 1 (306 aa).

Positions 1–142 are disordered; it reads MSSEKSGLPD…PPPAPAQTAQ (142 aa). Residues 1-223 lie on the Cytoplasmic side of the membrane; the sequence is MSSEKSGLPD…LEPRRPPHDY (223 aa). Positions 15–36 are enriched in pro residues; the sequence is TSPPPYNAPQPPAEPPAPPPQA. A compositionally biased stretch (basic residues) spans 40–49; that stretch reads SHHHHHHHYH. Composition is skewed to pro residues over residues 87 to 111 and 121 to 137; these read HAPPGPAAGAPPPGCATLPRMPPDP and PLPPPPPAAAAPPPPAP. The chain crosses the membrane as a helical span at residues 224 to 244; that stretch reads MPIAVLTTICCFWPTGIIAIF. At 245–275 the chain is on the extracellular side; it reads KAVQVRTALARGDMVSAEIASREARNFSFIS. An intramembrane region (helical) is located at residues 276-296; it reads LAVGIAAMVLCTILTVVIIIA. Residues 297-306 lie on the Extracellular side of the membrane; it reads AQHHENYWDP.

The protein belongs to the CD225/Dispanin family. Component of the outer core of AMPAR complex. AMPAR complex consists of an inner core made of 4 pore-forming GluA/GRIA proteins (GRIA1, GRIA2, GRIA3 and GRIA4) and 4 major auxiliary subunits arranged in a twofold symmetry. One of the two pairs of distinct binding sites is occupied either by CNIH2, CNIH3 or CACNG2, CACNG3. The other harbors CACNG2, CACNG3, CACNG4, CACNG8 or GSG1L. This inner core of AMPAR complex is complemented by outer core constituents binding directly to the GluA/GRIA proteins at sites distinct from the interaction sites of the inner core constituents. Outer core constituents include at least PRRT1, PRRT2, CKAMP44/SHISA9, FRRS1L and NRN1. The proteins of the inner and outer core serve as a platform for other, more peripherally associated AMPAR constituents. Alone or in combination, these auxiliary subunits control the gating and pharmacology of the AMPAR complex and profoundly impact their biogenesis and protein processing.

Its subcellular location is the cell membrane. The protein resides in the synapse. Its function is as follows. Required to maintain a pool of extrasynaptic AMPA-regulated glutamate receptors (AMPAR) which is necessary for synapse development and function. Regulates basal AMPAR function and synaptic transmission during development but is dispensable at mature hippocampal synapses. Plays a role in regulating basal phosphorylation levels of glutamate receptor GRIA1 and promotes GRIA1 and GRIA2 cell surface expression. This is Proline-rich transmembrane protein 1 from Homo sapiens (Human).